The primary structure comprises 375 residues: MQCALYDAGRCRSCQWITQPIPEQLSAKTADLKNLLADFPVEEWCAPVSGPEQGFRNKAKMVVSGSVEKPLLGMLHRDGTPEDLCDCPLYPASFAPVFAALKPFIARAGLTPYNVARKRGELKYILLTESQSDGGMMLRFVLRSDTKLAQLRKALPWLQEQLPQLKVITVNIQPVHMAIMEGETEIYLTEQQALAERFNDVPLWIRPQSFFQTNPAVASQLYATARDWVRQLPVNHMWDLFCGVGGFGLHCATPDIQLTGIEIAPEAIACAKQSAAELGLTRLQFQALDSTQFATAQGEVPELVLVNPPRRGIGIPLCDYLSTMAPRFIIYSSCNAQTMAKDIRELPGYRIERVQLFDMFPHTAHYEVLTLLVKQ.

The [4Fe-4S] cluster site is built by Cys-3, Cys-11, Cys-14, and Cys-87. 4 residues coordinate S-adenosyl-L-methionine: Gln-212, Phe-241, Glu-262, and Asn-307. Cys-334 serves as the catalytic Nucleophile.

The protein belongs to the class I-like SAM-binding methyltransferase superfamily. RNA M5U methyltransferase family. RlmC subfamily.

It catalyses the reaction uridine(747) in 23S rRNA + S-adenosyl-L-methionine = 5-methyluridine(747) in 23S rRNA + S-adenosyl-L-homocysteine + H(+). Catalyzes the formation of 5-methyl-uridine at position 747 (m5U747) in 23S rRNA. In Escherichia coli (strain SMS-3-5 / SECEC), this protein is 23S rRNA (uracil(747)-C(5))-methyltransferase RlmC.